A 382-amino-acid chain; its full sequence is Small ribosomal subunit protein mS35 (382 aa).

The segment covering 363 to 375 (GRGGKALPGGKGG) has biased composition (gly residues). The disordered stretch occupies residues 363-382 (GRGGKALPGGKGGKMQRSKR).

The protein belongs to the mitochondrion-specific ribosomal protein mS35 family. In terms of assembly, component of the mitochondrial small ribosomal subunit (mt-SSU). Mature N.crassa 74S mitochondrial ribosomes consist of a small (37S) and a large (54S) subunit. The 37S small subunit contains a 16S ribosomal RNA (16S mt-rRNA) and 32 different proteins. The 54S large subunit contains a 23S rRNA (23S mt-rRNA) and 42 different proteins.

The protein resides in the mitochondrion. Component of the mitochondrial ribosome (mitoribosome), a dedicated translation machinery responsible for the synthesis of mitochondrial genome-encoded proteins, including at least some of the essential transmembrane subunits of the mitochondrial respiratory chain. The mitoribosomes are attached to the mitochondrial inner membrane and translation products are cotranslationally integrated into the membrane. This chain is Small ribosomal subunit protein mS35 (rsm24), found in Neurospora crassa (strain ATCC 24698 / 74-OR23-1A / CBS 708.71 / DSM 1257 / FGSC 987).